The sequence spans 471 residues: Pneumolysin (471 aa).

The next 4 beta stranded transmembrane spans lie at 158-171 (MEQL…DFEK), 178-187 (IDFNSVHSGE), 256-265 (SDEVEAAFEA), and 273-285 (APQT…LDNT). The Conserved undecapeptide motif lies at 427-437 (ECTGLAWEWWR). Positions 459–460 (TL) match the Cholesterol binding motif.

Belongs to the cholesterol-dependent cytolysin family. In terms of assembly, elongated monomers align along their lengths, indicating intersubunit contacts and suggesting the prepore structure. Modeling based on cryo-EM shows a homooligomeric pore complex containing 38-44 subunits; when inserted in the host membrane. The size of isolated pores is detergent-dependent; in amphipol A8-35 homogenous rings form with 42 subunits.

The protein resides in the secreted. The protein localises to the host cell membrane. Erythrocytes hemolysis is inhibited by cholesterol. Functionally, a cholesterol-dependent toxin that causes cytolysis by forming pores in cholesterol-containing host membranes. After binding to target membranes, the protein undergoes a major conformation change, leading to its insertion in the host membrane and formation of an oligomeric pore complex. Cholesterol is required for binding to host membranes, membrane insertion and pore formation; cholesterol binding is mediated by a Thr-Leu pair in the C-terminus. Can be reversibly inactivated by oxidation. The protein is Pneumolysin (ply) of Streptococcus pneumoniae serotype 2 (strain D39 / NCTC 7466).